A 337-amino-acid polypeptide reads, in one-letter code: Ribosomal RNA small subunit methyltransferase H (337 aa).

S-adenosyl-L-methionine contacts are provided by residues 36–38, aspartate 56, phenylalanine 82, aspartate 100, and glutamine 107; that span reads GGH. Residues 314–337 are disordered; that stretch reads GLERRSGRIPNPRSPIPASQGDAR.

It belongs to the methyltransferase superfamily. RsmH family.

The protein resides in the cytoplasm. The enzyme catalyses cytidine(1402) in 16S rRNA + S-adenosyl-L-methionine = N(4)-methylcytidine(1402) in 16S rRNA + S-adenosyl-L-homocysteine + H(+). In terms of biological role, specifically methylates the N4 position of cytidine in position 1402 (C1402) of 16S rRNA. This Xanthomonas oryzae pv. oryzae (strain PXO99A) protein is Ribosomal RNA small subunit methyltransferase H.